The primary structure comprises 127 residues: Small ribosomal subunit protein uS8m (127 aa).

Belongs to the universal ribosomal protein uS8 family.

It is found in the mitochondrion. The protein is Small ribosomal subunit protein uS8m (RPS8) of Acanthamoeba castellanii (Amoeba).